Here is a 273-residue protein sequence, read N- to C-terminus: Manganese catalase (273 aa).

E35 contacts Mn(2+). Ca(2+) is bound by residues D57 and D61. Mn(2+)-binding residues include E66, H69, E149, and H182. Ca(2+) contacts are provided by N220, S222, and G224. The disordered stretch occupies residues 254–273 (EKPELKPAPPCVHNTLPGRE).

Belongs to the manganese catalase family. As to quaternary structure, homohexamer. It depends on Ca(2+) as a cofactor. Requires Mn(2+) as cofactor.

It catalyses the reaction 2 H2O2 = O2 + 2 H2O. With respect to regulation, inhibited in the presence of EDTA. Resistant to inhibition by sodium azide. In terms of biological role, catalyzes the decomposition of hydrogen peroxide into water and oxygen. No significant activity could be detected with any of the other tested substrates, including glutathione, pyrogallol, NADH, NADPH and o-dianisidine. The protein is Manganese catalase of Bacillus subtilis.